We begin with the raw amino-acid sequence, 1187 residues long: BAI1-associated protein 3 (1187 aa).

The disordered stretch occupies residues serine 55–proline 81. The region spanning serine 176–alanine 335 is the C2 1 domain. Ca(2+) contacts are provided by aspartate 211, aspartate 217, aspartate 295, and aspartate 297. The region spanning phenylalanine 663 to leucine 784 is the MHD1 domain. Positions aspartate 888 to phenylalanine 996 constitute an MHD2 domain. A C2 2 domain is found at arginine 1010–glycine 1136. Ca(2+)-binding residues include leucine 1040, aspartate 1041, aspartate 1047, aspartate 1105, aspartate 1107, serine 1110, and aspartate 1113.

Belongs to the unc-13 family. As to quaternary structure, interacts with ADGRB1; this interaction is direct. Interacts with endosomal SNARE proteins VAMP3, VAMP4, STX6 and STX16; this interaction is increased in the presence of calcium. Ca(2+) serves as cofactor. As to expression, predominantly expressed in brain. Also expressed in nonneural tissues such as breast and testes epithelium.

It is found in the cytoplasm. It localises to the cytosol. Its subcellular location is the recycling endosome membrane. The protein localises to the late endosome membrane. The protein resides in the golgi apparatus. It is found in the trans-Golgi network membrane. It localises to the cell membrane. Functionally, functions in endosome to Golgi retrograde transport. In response to calcium influx, may interact with SNARE fusion receptors and membrane phospholipids to mediate endosome fusion with the trans-Golgi network. By promoting the recycling of secretory vesicle transmembrane proteins, it indirectly controls dense-core secretory vesicle biogenesis, maturation and their ability to mediate the constitutive and regulated secretion of neurotransmitters and hormones. May regulate behavior and food intake by controlling calcium-stimulated exocytosis of neurotransmitters including NPY and serotonin and hormones like insulin. Proposed to play a role in hypothalamic neuronal firing by modulating gamma-aminobutyric acid (GABA)ergic inhibitory neurotransmission. In Homo sapiens (Human), this protein is BAI1-associated protein 3.